Reading from the N-terminus, the 565-residue chain is Fusion glycoprotein F0 (565 aa).

A signal peptide spans M1–C25. At Q26–T500 the chain is on the extracellular side. A disulfide bond links C70 and C199. N104 is a glycosylation site (N-linked (GlcNAc...) asparagine; by host). A fusion peptide region spans residues F117 to L141. A coiled-coil region spans residues A142–N170. N-linked (GlcNAc...) asparagine; by host glycosylation occurs at N245. Residues L278–I306 are leucine-zipper. 3 cysteine pairs are disulfide-bonded: C338/C347, C362/C370, and C401/C424. The N-linked (GlcNAc...) asparagine; by host glycan is linked to N449. Residues N466 to V491 are a coiled coil. The chain crosses the membrane as a helical span at residues V501 to V521. Topologically, residues L522 to R565 are cytoplasmic.

Belongs to the paramyxoviruses fusion glycoprotein family. In terms of assembly, homotrimer of disulfide-linked F1-F2. Interacts with HN and M proteins. In natural infection, inactive F0 is matured into F1 and F2 outside the cell by one or more trypsin-like, arginine-specific endoprotease secreted by the bronchial epithelial cells. One identified protease that may be involved in this process is tryptase Clara. Unlike most paramyxoviruses, Sendai F0 processing occurs on the cell surface and induces a conformational change in the protein that unmasks the fusion peptide. F0 maturation is a primary determinant for organ tropism and pathogenicity. F1 and F2 display interchain and intrachain disulfide bonds, that are necessary for correct folding and intracellular transport. In terms of processing, N-glycosylated; glycans consist of a mixture of high mannose-type oligosaccharides and of complex-type oligosaccharides. Glycosylation at Asn-245 is essential for membrane localization and F0 cleavage.

Its subcellular location is the virion membrane. It is found in the host cell membrane. Its function is as follows. Class I viral fusion protein. Under the current model, the protein has at least 3 conformational states: pre-fusion native state, pre-hairpin intermediate state, and post-fusion hairpin state. During viral and plasma cell membrane fusion, the heptad repeat (HR) regions assume a trimer-of-hairpins structure, positioning the fusion peptide in close proximity to the C-terminal region of the ectodomain. The formation of this structure appears to drive apposition and subsequent fusion of viral and plasma cell membranes. Directs fusion of viral and cellular membranes leading to delivery of the nucleocapsid into the cytoplasm. This fusion is pH independent and occurs directly at the outer cell membrane. The trimer of F1-F2 (F protein) interacts with HN tetramer at the virion surface. Upon HN binding to its cellular receptor, the hydrophobic fusion peptide is unmasked and interacts with the cellular membrane, inducing the fusion between cell and virion membranes. Later in infection, F proteins expressed at the plasma membrane of infected cells could mediate fusion with adjacent cells to form syncytia, a cytopathic effect that could lead to tissue necrosis. The chain is Fusion glycoprotein F0 (F) from Cavia cutleri (Guinea pig).